The sequence spans 502 residues: RNA-splicing ligase RtcB homolog 2 (502 aa).

Mn(2+) is bound by residues aspartate 120, cysteine 123, histidine 228, histidine 260, and histidine 354. Asparagine 227–glutamate 231 contacts GMP. GMP-binding positions include histidine 354–asparagine 355, glycine 403–methionine 406, serine 410, and histidine 429–glycine 432. The GMP-histidine intermediate role is filled by histidine 429.

This sequence belongs to the RtcB family. In terms of assembly, catalytic component of the tRNA-splicing ligase complex. Mn(2+) is required as a cofactor.

The catalysed reaction is a 3'-end 3'-phospho-ribonucleotide-RNA + a 5'-end dephospho-ribonucleoside-RNA + GTP = a ribonucleotidyl-ribonucleotide-RNA + GMP + diphosphate. It catalyses the reaction a 3'-end 2',3'-cyclophospho-ribonucleotide-RNA + a 5'-end dephospho-ribonucleoside-RNA + GTP + H2O = a ribonucleotidyl-ribonucleotide-RNA + GMP + diphosphate + H(+). Its function is as follows. Catalytic subunit of the tRNA-splicing ligase complex that acts by directly joining spliced tRNA halves to mature-sized tRNAs by incorporating the precursor-derived splice junction phosphate into the mature tRNA as a canonical 3',5'-phosphodiester. May act as an RNA ligase with broad substrate specificity, and may function toward other RNAs. The chain is RNA-splicing ligase RtcB homolog 2 from Culex quinquefasciatus (Southern house mosquito).